Here is a 289-residue protein sequence, read N- to C-terminus: Thiazole synthase (289 aa).

Lys-132 functions as the Schiff-base intermediate with DXP in the catalytic mechanism. Residues Gly-193, 219-220, and 241-242 each bind 1-deoxy-D-xylulose 5-phosphate; these read AG and NT.

The protein belongs to the ThiG family. Homotetramer. Forms heterodimers with either ThiH or ThiS.

It is found in the cytoplasm. The catalysed reaction is [ThiS sulfur-carrier protein]-C-terminal-Gly-aminoethanethioate + 2-iminoacetate + 1-deoxy-D-xylulose 5-phosphate = [ThiS sulfur-carrier protein]-C-terminal Gly-Gly + 2-[(2R,5Z)-2-carboxy-4-methylthiazol-5(2H)-ylidene]ethyl phosphate + 2 H2O + H(+). It participates in cofactor biosynthesis; thiamine diphosphate biosynthesis. Its function is as follows. Catalyzes the rearrangement of 1-deoxy-D-xylulose 5-phosphate (DXP) to produce the thiazole phosphate moiety of thiamine. Sulfur is provided by the thiocarboxylate moiety of the carrier protein ThiS. In vitro, sulfur can be provided by H(2)S. This chain is Thiazole synthase, found in Rhodospirillum rubrum (strain ATCC 11170 / ATH 1.1.1 / DSM 467 / LMG 4362 / NCIMB 8255 / S1).